The primary structure comprises 360 residues: Peptide chain release factor 1 (360 aa).

At Gln-235 the chain carries N5-methylglutamine. Positions Arg-284–Arg-303 are disordered.

It belongs to the prokaryotic/mitochondrial release factor family. In terms of processing, methylated by PrmC. Methylation increases the termination efficiency of RF1.

It localises to the cytoplasm. Functionally, peptide chain release factor 1 directs the termination of translation in response to the peptide chain termination codons UAG and UAA. This Bordetella avium (strain 197N) protein is Peptide chain release factor 1.